Reading from the N-terminus, the 160-residue chain is MLKFLSTKCKQFNSLNHIIKHKIYFPSKSNKSYFSSSVKDVEKKNKEPIIQLTNDAINKMKEINLKYKNSKALKVCVEAGGCSGFQYSFSLIDKNKIKDKEQIVYDKDCIVVIDKQVIDILKNSKIHYINNLISKKFTIENIQNISSKCSCGNSFDIDFV.

It belongs to the HesB/IscA family. In terms of assembly, tetramer.

Its subcellular location is the mitochondrion. It functions in the pathway cofactor biosynthesis; iron-sulfur cluster biosynthesis. Its function is as follows. Participates in iron-sulfur cluster formation (ISC) pathway for iron-sulfur (Fe-S) cluster biogenesis. Can bind iron and [4Fe-4S] clusters. May function as an iron chaperone. The sequence is that of Iron-sulfur assembly protein IscA1 from Plasmodium falciparum (isolate 3D7).